Consider the following 182-residue polypeptide: Putative CTD phosphatase-like protein 355R (182 aa).

The region spanning Met1–His180 is the FCP1 homology domain.

The protein belongs to the IIV-6 355R family.

Its function is as follows. May function as a phosphatase. This Invertebrate iridescent virus 6 (IIV-6) protein is Putative CTD phosphatase-like protein 355R.